A 255-amino-acid polypeptide reads, in one-letter code: Adenosylcobinamide-GDP ribazoletransferase (255 aa).

A run of 6 helical transmembrane segments spans residues leucine 24–valine 44, alanine 45–valine 65, valine 98–serine 118, leucine 122–isoleucine 142, lysine 164–serine 184, and serine 187–isoleucine 207.

This sequence belongs to the CobS family. It depends on Mg(2+) as a cofactor.

Its subcellular location is the cell membrane. It catalyses the reaction alpha-ribazole + adenosylcob(III)inamide-GDP = adenosylcob(III)alamin + GMP + H(+). It carries out the reaction alpha-ribazole 5'-phosphate + adenosylcob(III)inamide-GDP = adenosylcob(III)alamin 5'-phosphate + GMP + H(+). The protein operates within cofactor biosynthesis; adenosylcobalamin biosynthesis; adenosylcobalamin from cob(II)yrinate a,c-diamide: step 7/7. In terms of biological role, joins adenosylcobinamide-GDP and alpha-ribazole to generate adenosylcobalamin (Ado-cobalamin). Also synthesizes adenosylcobalamin 5'-phosphate from adenosylcobinamide-GDP and alpha-ribazole 5'-phosphate. The polypeptide is Adenosylcobinamide-GDP ribazoletransferase (Thermoplasma acidophilum (strain ATCC 25905 / DSM 1728 / JCM 9062 / NBRC 15155 / AMRC-C165)).